The following is a 363-amino-acid chain: Peptide chain release factor 1 (363 aa).

Gln237 is subject to N5-methylglutamine. Basic and acidic residues predominate over residues 284-296 (EDEKRRSAEESTR). The interval 284-305 (EDEKRRSAEESTRRSLVASGDR) is disordered.

The protein belongs to the prokaryotic/mitochondrial release factor family. Methylated by PrmC. Methylation increases the termination efficiency of RF1.

It localises to the cytoplasm. Peptide chain release factor 1 directs the termination of translation in response to the peptide chain termination codons UAG and UAA. The chain is Peptide chain release factor 1 from Shewanella sp. (strain MR-4).